We begin with the raw amino-acid sequence, 118 residues long: UPF0295 protein BT9727_0449 (118 aa).

2 consecutive transmembrane segments (helical) span residues 12-32 (IRTFALSLVFIGLFIAYLGVF) and 43-63 (FMMVGFLAVIASTVVYFWIGM).

This sequence belongs to the UPF0295 family.

The protein resides in the cell membrane. In Bacillus thuringiensis subsp. konkukian (strain 97-27), this protein is UPF0295 protein BT9727_0449.